A 120-amino-acid polypeptide reads, in one-letter code: Large ribosomal subunit protein bL19 (120 aa).

The protein belongs to the bacterial ribosomal protein bL19 family.

Functionally, this protein is located at the 30S-50S ribosomal subunit interface and may play a role in the structure and function of the aminoacyl-tRNA binding site. The chain is Large ribosomal subunit protein bL19 from Geobacillus kaustophilus (strain HTA426).